The chain runs to 58 residues: Sperm protamine P2 (58 aa).

Residues 1 to 58 (RRRRRRGKGRGKKRKGKGKKRGKGRRRGSKGRKKKKGKGKKRKRRRRRRRKGSKGKGK) are disordered.

Gonads.

The protein localises to the nucleus. Its subcellular location is the chromosome. Its function is as follows. Protamines substitute for histones in the chromatin of sperm during the haploid phase of spermatogenesis. They compact sperm DNA into a highly condensed, stable and inactive complex. The polypeptide is Sperm protamine P2 (Bolinus brandaris (Purple dye murex)).